An 85-amino-acid chain; its full sequence is Putative membrane protein insertion efficiency factor (85 aa).

Belongs to the UPF0161 family.

It is found in the cell inner membrane. In terms of biological role, could be involved in insertion of integral membrane proteins into the membrane. In Escherichia coli O157:H7, this protein is Putative membrane protein insertion efficiency factor.